The primary structure comprises 302 residues: Sulfate adenylyltransferase subunit 2 (302 aa).

Belongs to the PAPS reductase family. CysD subfamily. As to quaternary structure, heterodimer composed of CysD, the smaller subunit, and CysN.

It catalyses the reaction sulfate + ATP + H(+) = adenosine 5'-phosphosulfate + diphosphate. It functions in the pathway sulfur metabolism; hydrogen sulfide biosynthesis; sulfite from sulfate: step 1/3. Its function is as follows. With CysN forms the ATP sulfurylase (ATPS) that catalyzes the adenylation of sulfate producing adenosine 5'-phosphosulfate (APS) and diphosphate, the first enzymatic step in sulfur assimilation pathway. APS synthesis involves the formation of a high-energy phosphoric-sulfuric acid anhydride bond driven by GTP hydrolysis by CysN coupled to ATP hydrolysis by CysD. The polypeptide is Sulfate adenylyltransferase subunit 2 (Bacteroides thetaiotaomicron (strain ATCC 29148 / DSM 2079 / JCM 5827 / CCUG 10774 / NCTC 10582 / VPI-5482 / E50)).